A 114-amino-acid chain; its full sequence is Large ribosomal subunit protein bL19 (114 aa).

This sequence belongs to the bacterial ribosomal protein bL19 family.

Functionally, this protein is located at the 30S-50S ribosomal subunit interface and may play a role in the structure and function of the aminoacyl-tRNA binding site. This chain is Large ribosomal subunit protein bL19, found in Halalkalibacterium halodurans (strain ATCC BAA-125 / DSM 18197 / FERM 7344 / JCM 9153 / C-125) (Bacillus halodurans).